We begin with the raw amino-acid sequence, 207 residues long: Holliday junction branch migration complex subunit RuvA (207 aa).

The tract at residues 1–65 (MIGRIRGVIL…EDAQLLYGFN (65 aa)) is domain I. The tract at residues 66–143 (QKQERALFRE…KGLNGDLFEQ (78 aa)) is domain II. Positions 144 to 158 (NGDIELPASASSKAP) are flexible linker. The tract at residues 159 to 207 (SAADIEAEASAALIALGYKPQEAAKMISRVATAGADSETLIKEALRAAI) is domain III.

This sequence belongs to the RuvA family. Homotetramer. Forms an RuvA(8)-RuvB(12)-Holliday junction (HJ) complex. HJ DNA is sandwiched between 2 RuvA tetramers; dsDNA enters through RuvA and exits via RuvB. An RuvB hexamer assembles on each DNA strand where it exits the tetramer. Each RuvB hexamer is contacted by two RuvA subunits (via domain III) on 2 adjacent RuvB subunits; this complex drives branch migration. In the full resolvosome a probable DNA-RuvA(4)-RuvB(12)-RuvC(2) complex forms which resolves the HJ.

The protein localises to the cytoplasm. In terms of biological role, the RuvA-RuvB-RuvC complex processes Holliday junction (HJ) DNA during genetic recombination and DNA repair, while the RuvA-RuvB complex plays an important role in the rescue of blocked DNA replication forks via replication fork reversal (RFR). RuvA specifically binds to HJ cruciform DNA, conferring on it an open structure. The RuvB hexamer acts as an ATP-dependent pump, pulling dsDNA into and through the RuvAB complex. HJ branch migration allows RuvC to scan DNA until it finds its consensus sequence, where it cleaves and resolves the cruciform DNA. This chain is Holliday junction branch migration complex subunit RuvA, found in Proteus mirabilis (strain HI4320).